The following is a 65-amino-acid chain: Ferredoxin soy (65 aa).

In terms of domain architecture, 4Fe-4S ferredoxin-type spans 2–29; the sequence is GVQVDKERCVGAGMCALTAPDVFTQDDD. 3 residues coordinate [3Fe-4S] cluster: cysteine 10, cysteine 16, and cysteine 55.

[3Fe-4S] cluster serves as cofactor.

Functionally, electron transport protein for the cytochrome P-450-SOY system. The sequence is that of Ferredoxin soy (soyB) from Streptomyces griseus.